Consider the following 367-residue polypeptide: Apolipoprotein A-V (367 aa).

A signal peptide spans M1–T20. At S56 the chain carries Phosphoserine. Positions L71–G90 are disordered.

This sequence belongs to the apolipoprotein A1/A4/E family. Interacts with GPIHBP1. Interacts with SORL1; this interaction leads to APOA5 internalization and sorting either to lysosomes and degradation, or to the trans-Golgi network. Phosphorylated by FAM20C in the extracellular medium.

The protein resides in the secreted. The protein localises to the early endosome. Its subcellular location is the late endosome. It is found in the golgi apparatus. It localises to the trans-Golgi network. Functionally, minor apolipoprotein mainly associated with HDL and to a lesser extent with VLDL. May also be associated with chylomicrons. Important determinant of plasma triglyceride (TG) levels by both being a potent stimulator of apo-CII lipoprotein lipase (LPL) TG hydrolysis and an inhibitor of the hepatic VLDL-TG production rate (without affecting the VLDL-apoB production rate). Activates poorly lecithin:cholesterol acyltransferase (LCAT) and does not enhance efflux of cholesterol from macrophages. Binds heparin. The chain is Apolipoprotein A-V (APOA5) from Neomonachus schauinslandi (Hawaiian monk seal).